The sequence spans 271 residues: MSDSPERVYPMLLDFVRKETISKNLLRVTLTGEDLIGFPEDQNGSHIKVFFPNQASGILQLPVREGDNVIWPEHKPVPRAYSVRQYRAAVNELDIDFVTHGEETPGGGWALKADIGSQIGLIGPAGPDPLIEPADWHIIAGDLSAVPAISAILEKLPSDAKGYVFIEVDEIEDIHDLVHPEEMAINWLMRNPHDAEPALAKAIKQLPSPEKATSLSAFIAGENQSVINCRKILRNDYQIARDKLYAIPYWKRGKTEEAYHDERHDVMDAVY.

The 124-residue stretch at Val-8–Ile-131 folds into the FAD-binding FR-type domain.

Belongs to the SIP oxidoreductase family. Monomer. FAD serves as cofactor.

It localises to the cytoplasm. It catalyses the reaction 2 a Fe(II)-siderophore + NAD(+) + H(+) = 2 a Fe(III)-siderophore + NADH. Ferric-siderophore reductase involved in iron removal from the siderophores after their transport into the cell. Acts as a major ferric-vulnibactin reductase catalyzing the reduction of Fe(3+)-vulnibactin, a catecholate siderophore synthesized by V.vulnificus. This chain is Ferric vulnibactin reductase VuuB, found in Vibrio vulnificus (strain CMCP6).